The primary structure comprises 181 residues: Adenylate kinase (181 aa).

7–15 (GVAGVGKTT) provides a ligand contact to ATP.

The protein belongs to the archaeal adenylate kinase family.

Its subcellular location is the cytoplasm. It carries out the reaction AMP + ATP = 2 ADP. The polypeptide is Adenylate kinase (adkA) (Thermoplasma volcanium (strain ATCC 51530 / DSM 4299 / JCM 9571 / NBRC 15438 / GSS1)).